The chain runs to 151 residues: Deoxyuridine 5'-triphosphate nucleotidohydrolase (151 aa).

Substrate-binding positions include 70 to 72 (RSG), N83, 87 to 89 (LID), and M97.

It belongs to the dUTPase family. The cofactor is Mg(2+).

The catalysed reaction is dUTP + H2O = dUMP + diphosphate + H(+). Its pathway is pyrimidine metabolism; dUMP biosynthesis; dUMP from dCTP (dUTP route): step 2/2. This enzyme is involved in nucleotide metabolism: it produces dUMP, the immediate precursor of thymidine nucleotides and it decreases the intracellular concentration of dUTP so that uracil cannot be incorporated into DNA. This is Deoxyuridine 5'-triphosphate nucleotidohydrolase from Ectopseudomonas mendocina (strain ymp) (Pseudomonas mendocina).